A 323-amino-acid polypeptide reads, in one-letter code: Phosphomevalonate kinase (323 aa).

This sequence belongs to the GHMP kinase family. Homodimer. Mg(2+) is required as a cofactor.

The catalysed reaction is (R)-5-phosphomevalonate + ATP = (R)-5-diphosphomevalonate + ADP. The protein operates within isoprenoid biosynthesis; isopentenyl diphosphate biosynthesis via mevalonate pathway; isopentenyl diphosphate from (R)-mevalonate: step 2/3. Catalyzes the phosphorylation of (R)-mevalonate 5-phosphate (MVAP) to (R)-mevalonate 5-diphosphate (MVAPP). Functions in the mevalonate (MVA) pathway leading to isopentenyl diphosphate (IPP), a key precursor for the biosynthesis of isoprenoid compounds such as archaeal membrane lipids. The polypeptide is Phosphomevalonate kinase (Saccharolobus solfataricus (strain ATCC 35092 / DSM 1617 / JCM 11322 / P2) (Sulfolobus solfataricus)).